A 338-amino-acid polypeptide reads, in one-letter code: SPbeta prophage-derived uncharacterized protein YonB (338 aa).

This Bacillus subtilis (strain 168) protein is SPbeta prophage-derived uncharacterized protein YonB (yonB).